We begin with the raw amino-acid sequence, 1397 residues long: DNA-directed RNA polymerase subunit beta' (1397 aa).

Residues cysteine 75, cysteine 77, cysteine 90, and cysteine 93 each contribute to the Zn(2+) site. The Mg(2+) site is built by aspartate 465, aspartate 467, and aspartate 469. Positions 819, 893, 900, and 903 each coordinate Zn(2+).

This sequence belongs to the RNA polymerase beta' chain family. As to quaternary structure, the RNAP catalytic core consists of 2 alpha, 1 beta, 1 beta' and 1 omega subunit. When a sigma factor is associated with the core the holoenzyme is formed, which can initiate transcription. The cofactor is Mg(2+). Requires Zn(2+) as cofactor.

It catalyses the reaction RNA(n) + a ribonucleoside 5'-triphosphate = RNA(n+1) + diphosphate. Functionally, DNA-dependent RNA polymerase catalyzes the transcription of DNA into RNA using the four ribonucleoside triphosphates as substrates. In Acinetobacter baumannii (strain SDF), this protein is DNA-directed RNA polymerase subunit beta'.